Here is a 283-residue protein sequence, read N- to C-terminus: NFU1 iron-sulfur cluster scaffold homolog, mitochondrial (283 aa).

Residues methionine 1–isoleucine 30 constitute a mitochondrion transit peptide. The segment at isoleucine 182–valine 250 is nifU. [4Fe-4S] cluster contacts are provided by cysteine 219 and cysteine 222.

Belongs to the NifU family.

It localises to the mitochondrion. Functionally, molecular scaffold for [Fe-S] cluster assembly of mitochondrial iron-sulfur proteins. The sequence is that of NFU1 iron-sulfur cluster scaffold homolog, mitochondrial from Drosophila yakuba (Fruit fly).